Consider the following 317-residue polypeptide: Phosphopantothenate--cysteine ligase 1 (317 aa).

It belongs to the PPC synthetase family. Homodimer.

The enzyme catalyses (R)-4'-phosphopantothenate + L-cysteine + ATP = N-[(R)-4-phosphopantothenoyl]-L-cysteine + AMP + diphosphate + H(+). It participates in cofactor biosynthesis; coenzyme A biosynthesis; CoA from (R)-pantothenate: step 2/5. In terms of biological role, catalyzes the first step in the biosynthesis of coenzyme A from vitamin B5/pantothenate, where cysteine is conjugated to 4'-phosphopantothenate to form 4-phosphopantothenoylcysteine. The catalytic activity is not CTP- but ATP-dependent. In Arabidopsis thaliana (Mouse-ear cress), this protein is Phosphopantothenate--cysteine ligase 1 (PPCS1).